Here is a 346-residue protein sequence, read N- to C-terminus: KH domain-containing, RNA-binding, signal transduction-associated protein 3 (346 aa).

Residues 1–160 (MEEKYLPELM…IKKFLIPDYN (160 aa)) form an involved in homodimerization region. Residue K4 forms a Glycyl lysine isopeptide (Lys-Gly) (interchain with G-Cter in SUMO2) linkage. Residues 61-127 (LIPVKQFPKF…AKYFHLNDDL (67 aa)) enclose the KH domain. Residues 212-251 (RPVGVVVPRGTPTPRGVLSTRGPVSRGRGLLTPRARGVPP) are interaction with SIAH1. Residues 213-228 (PVGVVVPRGTPTPRGV) are compositionally biased toward low complexity. 2 disordered regions span residues 213–267 (PVGV…ETYG) and 318–346 (QEEW…YGRY). The span at 253–262 (GYRPPPPPPT) shows a compositional bias: pro residues.

The protein belongs to the KHDRBS family. Self-associates to form homooligomers; dimerization increases RNA affinity. Interacts with KHDRBS2/SLM-1. Interacts with KHDRBS1/SAM68; heterooligomer formation of KHDRBS family proteins may modulate RNA substrate specificity. Interacts with the splicing regulatory proteins SFRS9, SAFB and YTHDC1. Interacts with HNRPL. Interacts with RBMX, RBMY1A1, p85 subunit of PI3-kinase, SERPINB5. Interacts with SIAH1 which promotes targeting for degradation. In terms of processing, phosphorylated on tyrosine residues. Isoform 1 C-terminal region is tyrosine-rich, but isoform 2 lacking this C-terminal region is also tyrosine-phosphorylated. In terms of tissue distribution, ubiquitous with higher expression in testis, skeletal muscle and brain. Expressed in the kidney only in podocytes, the glomerular epithelial cells of the kidney. Strongly expressed after meiosis.

Its subcellular location is the nucleus. Its function is as follows. RNA-binding protein that plays a role in the regulation of alternative splicing and influences mRNA splice site selection and exon inclusion. Binds preferentially to the 5'-[AU]UAAA-3' motif in vitro. Binds optimally to RNA containing 5'-[AU]UAA-3' as a bipartite motif spaced by more than 15 nucleotides. Binds poly(A). RNA-binding abilities are down-regulated by tyrosine kinase PTK6. Involved in splice site selection of vascular endothelial growth factor. In vitro regulates CD44 alternative splicing by direct binding to purine-rich exonic enhancer. Can regulate alternative splicing of neurexins NRXN1-3 in the laminin G-like domain 6 containing the evolutionary conserved neurexin alternative spliced segment 4 (AS4) involved in neurexin selective targeting to postsynaptic partners such as neuroligins and LRRTM family members. Targeted, cell-type specific splicing regulation of NRXN1 at AS4 is involved in neuronal glutamatergic synapse function and plasticity. May regulate expression of KHDRBS2/SLIM-1 in defined brain neuron populations by modifying its alternative splicing. Can bind FABP9 mRNA. May play a role as a negative regulator of cell growth. Inhibits cell proliferation. Functionally, (Microbial infection) Involved in post-transcriptional regulation of HIV-1 gene expression. The protein is KH domain-containing, RNA-binding, signal transduction-associated protein 3 (KHDRBS3) of Homo sapiens (Human).